The chain runs to 349 residues: DNA polymerase IV (349 aa).

Positions 4-185 (IIHIDCDCFY…LPVAKLHGVG (182 aa)) constitute a UmuC domain. The Mg(2+) site is built by Asp-8 and Asp-103. Residue Glu-104 is part of the active site.

Belongs to the DNA polymerase type-Y family. In terms of assembly, monomer. Mg(2+) is required as a cofactor.

It localises to the cytoplasm. It carries out the reaction DNA(n) + a 2'-deoxyribonucleoside 5'-triphosphate = DNA(n+1) + diphosphate. Functionally, poorly processive, error-prone DNA polymerase involved in untargeted mutagenesis. Copies undamaged DNA at stalled replication forks, which arise in vivo from mismatched or misaligned primer ends. These misaligned primers can be extended by PolIV. Exhibits no 3'-5' exonuclease (proofreading) activity. May be involved in translesional synthesis, in conjunction with the beta clamp from PolIII. The polypeptide is DNA polymerase IV (Pseudomonas paraeruginosa (strain DSM 24068 / PA7) (Pseudomonas aeruginosa (strain PA7))).